A 96-amino-acid chain; its full sequence is Co-chaperonin GroES (96 aa).

It belongs to the GroES chaperonin family. As to quaternary structure, heptamer of 7 subunits arranged in a ring. Interacts with the chaperonin GroEL.

It localises to the cytoplasm. Functionally, together with the chaperonin GroEL, plays an essential role in assisting protein folding. The GroEL-GroES system forms a nano-cage that allows encapsulation of the non-native substrate proteins and provides a physical environment optimized to promote and accelerate protein folding. GroES binds to the apical surface of the GroEL ring, thereby capping the opening of the GroEL channel. In Methylorubrum populi (strain ATCC BAA-705 / NCIMB 13946 / BJ001) (Methylobacterium populi), this protein is Co-chaperonin GroES.